We begin with the raw amino-acid sequence, 145 residues long: Ribonuclease H (145 aa).

Residues 2–143 enclose the RNase H type-1 domain; it reads SKKEVAIYTD…ADSLARKAII (142 aa). Mg(2+) is bound by residues Asp11, Glu49, Asp71, and Asp135.

Belongs to the RNase H family. Monomer. Mg(2+) is required as a cofactor.

Its subcellular location is the cytoplasm. It carries out the reaction Endonucleolytic cleavage to 5'-phosphomonoester.. Functionally, endonuclease that specifically degrades the RNA of RNA-DNA hybrids. The chain is Ribonuclease H from Wolbachia sp. subsp. Drosophila simulans (strain wRi).